A 474-amino-acid chain; its full sequence is MWQIRASAGCHSSPGKDKEVTLENTMNFSDIYHSDEEYFRKLKDLRAAHAEAMVKLEKMYQDKLTMKDIQAALVGDDSSSSASEKSCSHPALSATSLSEPDLDRSSSLSTTTDELPDLEKKTPGEIGTRSYAKELINNMWNDFSVEDYTQYDSDLQTAKKNRKKPKAWTPRITVPVPFEMTVREQKRREKASDAQETREKMLKRNEDDAECKKKFRANPVPSRLLLPLYEDLVKQNEERRKKTRERSKAALLASQKPFKFIAREEQKQAIREKKLRELCRAKKKPKQFKARPVPRFIYRPPANVKPKREELYGDSRTQPKARDVLQSSPWPSHSTYRAFRDPRSPAMPRGKHRHRRLSPSDQGLEKWKEPFSEQSFRNCPVLCDQCCLYESLCDSNKRQKILADIRMGEEILKETRRPNPSPRHKSPRRSAHASARPCEYSPPMPTASSRGREQAIRRSEKARMKELARIGGAR.

Disordered stretches follow at residues 78 to 126, 185 to 210, and 308 to 364; these read SSSS…PGEI, QKRR…DDAE, and REEL…DQGL. Residues 188–250 are a coiled coil; it reads REKASDAQET…KKTRERSKAA (63 aa). Positions 274–454 are required for interaction with CFAP418; it reads KLRELCRAKK…PTASSRGREQ (181 aa). Positions 325 to 335 are enriched in polar residues; the sequence is LQSSPWPSHST. Residues K397 and K413 each participate in a glycyl lysine isopeptide (Lys-Gly) (interchain with G-Cter in SUMO2) cross-link. The interval 412-474 is disordered; sequence LKETRRPNPS…KELARIGGAR (63 aa). Over residues 422 to 431 the composition is skewed to basic residues; that stretch reads PRHKSPRRSA. The span at 450-468 shows a compositional bias: basic and acidic residues; it reads RGREQAIRRSEKARMKELA.

This sequence belongs to the FAM161 family. In terms of assembly, interacts (via central region) with CFAP418 (via N-terminus); the interaction is direct. Interacts (via C-terminus) with microtubules. Interacts with LCA5. Interacts with CEP290. Interacts with SDCCAG8. Interacts with FAM161B. Interacts with POC1B. Interacts with CEP78. Forms a microtubule-associated complex with POC5, CETN2 and POC1B. Interacts with CCDC15. In terms of tissue distribution, expressed in the retina and kidney.

The protein localises to the cytoplasm. Its subcellular location is the cytoskeleton. It localises to the cilium basal body. The protein resides in the cell projection. It is found in the cilium. The protein localises to the microtubule organizing center. Its subcellular location is the centrosome. It localises to the centriole. Involved in ciliogenesis. The sequence is that of Protein FAM161A from Rattus norvegicus (Rat).